Reading from the N-terminus, the 254-residue chain is Coproheme decarboxylase (254 aa).

Residues arginine 136, 150–154, histidine 177, glutamine 190, and serine 228 contribute to the Fe-coproporphyrin III site; that span reads YPMDK. Residue tyrosine 150 is part of the active site.

It belongs to the ChdC family. Type 1 subfamily. It depends on Fe-coproporphyrin III as a cofactor.

The catalysed reaction is Fe-coproporphyrin III + 2 H2O2 + 2 H(+) = heme b + 2 CO2 + 4 H2O. It carries out the reaction Fe-coproporphyrin III + H2O2 + H(+) = harderoheme III + CO2 + 2 H2O. The enzyme catalyses harderoheme III + H2O2 + H(+) = heme b + CO2 + 2 H2O. Its pathway is porphyrin-containing compound metabolism; protoheme biosynthesis. Its function is as follows. Involved in coproporphyrin-dependent heme b biosynthesis. Catalyzes the decarboxylation of Fe-coproporphyrin III (coproheme) to heme b (protoheme IX), the last step of the pathway. The reaction occurs in a stepwise manner with a three-propionate intermediate. This is Coproheme decarboxylase from Bacillus licheniformis (strain ATCC 14580 / DSM 13 / JCM 2505 / CCUG 7422 / NBRC 12200 / NCIMB 9375 / NCTC 10341 / NRRL NRS-1264 / Gibson 46).